Consider the following 192-residue polypeptide: Protein GrpE (192 aa).

The disordered stretch occupies residues 1 to 34 (MSSKEQKTPNEQVSEEMENAAEQQVEATQETGEG). Polar residues predominate over residues 21-31 (AEQQVEATQET).

It belongs to the GrpE family. In terms of assembly, homodimer.

The protein resides in the cytoplasm. Participates actively in the response to hyperosmotic and heat shock by preventing the aggregation of stress-denatured proteins, in association with DnaK and GrpE. It is the nucleotide exchange factor for DnaK and may function as a thermosensor. Unfolded proteins bind initially to DnaJ; upon interaction with the DnaJ-bound protein, DnaK hydrolyzes its bound ATP, resulting in the formation of a stable complex. GrpE releases ADP from DnaK; ATP binding to DnaK triggers the release of the substrate protein, thus completing the reaction cycle. Several rounds of ATP-dependent interactions between DnaJ, DnaK and GrpE are required for fully efficient folding. In Yersinia enterocolitica serotype O:8 / biotype 1B (strain NCTC 13174 / 8081), this protein is Protein GrpE.